Here is a 318-residue protein sequence, read N- to C-terminus: Acetyl-coenzyme A carboxylase carboxyl transferase subunit alpha (318 aa).

The CoA carboxyltransferase C-terminal domain maps to 38-292; it reads KLEKRLAKLE…NKTITKSLHA (255 aa).

Belongs to the AccA family. Acetyl-CoA carboxylase is a heterohexamer composed of biotin carboxyl carrier protein (AccB), biotin carboxylase (AccC) and two subunits each of ACCase subunit alpha (AccA) and ACCase subunit beta (AccD).

The protein localises to the cytoplasm. The enzyme catalyses N(6)-carboxybiotinyl-L-lysyl-[protein] + acetyl-CoA = N(6)-biotinyl-L-lysyl-[protein] + malonyl-CoA. Its pathway is lipid metabolism; malonyl-CoA biosynthesis; malonyl-CoA from acetyl-CoA: step 1/1. In terms of biological role, component of the acetyl coenzyme A carboxylase (ACC) complex. First, biotin carboxylase catalyzes the carboxylation of biotin on its carrier protein (BCCP) and then the CO(2) group is transferred by the carboxyltransferase to acetyl-CoA to form malonyl-CoA. The protein is Acetyl-coenzyme A carboxylase carboxyl transferase subunit alpha of Listeria innocua serovar 6a (strain ATCC BAA-680 / CLIP 11262).